Reading from the N-terminus, the 496-residue chain is Probable cytosol aminopeptidase (496 aa).

Lysine 266 and aspartate 271 together coordinate Mn(2+). Lysine 278 is an active-site residue. The Mn(2+) site is built by aspartate 289, aspartate 348, and glutamate 350. The active site involves arginine 352.

Belongs to the peptidase M17 family. Mn(2+) serves as cofactor.

Its subcellular location is the cytoplasm. It carries out the reaction Release of an N-terminal amino acid, Xaa-|-Yaa-, in which Xaa is preferably Leu, but may be other amino acids including Pro although not Arg or Lys, and Yaa may be Pro. Amino acid amides and methyl esters are also readily hydrolyzed, but rates on arylamides are exceedingly low.. The catalysed reaction is Release of an N-terminal amino acid, preferentially leucine, but not glutamic or aspartic acids.. Functionally, presumably involved in the processing and regular turnover of intracellular proteins. Catalyzes the removal of unsubstituted N-terminal amino acids from various peptides. In Pseudomonas syringae pv. syringae (strain B728a), this protein is Probable cytosol aminopeptidase.